Consider the following 374-residue polypeptide: Coiled-coil domain-containing protein 89 (374 aa).

Positions 1 to 40 are disordered; the sequence is MRAPMLQKQQAPRMDTPPPEERLEKQNEKLNNQEEETEFK. The residue at position 16 (T16) is a Phosphothreonine. Residues 19-32 show a composition bias toward basic and acidic residues; sequence PEERLEKQNEKLNN. A coiled-coil region spans residues 20–351; it reads EERLEKQNEK…DELRLQSEAF (332 aa).

The protein belongs to the CCDC89 family. As to quaternary structure, interacts with HEY1.

It localises to the cytoplasm. It is found in the nucleus. In Homo sapiens (Human), this protein is Coiled-coil domain-containing protein 89 (CCDC89).